The sequence spans 249 residues: Small ribosomal subunit protein uS2 (249 aa).

Belongs to the universal ribosomal protein uS2 family.

The polypeptide is Small ribosomal subunit protein uS2 (Polynucleobacter necessarius subsp. necessarius (strain STIR1)).